The primary structure comprises 254 residues: Adenosylcobinamide-GDP ribazoletransferase (254 aa).

6 helical membrane-spanning segments follow: residues 36–56, 61–81, 114–134, 138–158, 197–217, and 232–252; these read YYPL…TLLL, PLVT…GIHL, ALSA…LLAL, LVPY…LIGV, WVLQ…ILLF, and LYGA…FPLL.

Belongs to the CobS family. Mg(2+) is required as a cofactor.

The protein resides in the cell membrane. It catalyses the reaction alpha-ribazole + adenosylcob(III)inamide-GDP = adenosylcob(III)alamin + GMP + H(+). The enzyme catalyses alpha-ribazole 5'-phosphate + adenosylcob(III)inamide-GDP = adenosylcob(III)alamin 5'-phosphate + GMP + H(+). Its pathway is cofactor biosynthesis; adenosylcobalamin biosynthesis; adenosylcobalamin from cob(II)yrinate a,c-diamide: step 7/7. In terms of biological role, joins adenosylcobinamide-GDP and alpha-ribazole to generate adenosylcobalamin (Ado-cobalamin). Also synthesizes adenosylcobalamin 5'-phosphate from adenosylcobinamide-GDP and alpha-ribazole 5'-phosphate. This is Adenosylcobinamide-GDP ribazoletransferase from Desulfitobacterium hafniense (strain Y51).